A 449-amino-acid chain; its full sequence is Glucose-6-phosphate isomerase 1 (449 aa).

Thr38 is modified (phosphothreonine). Residue Glu290 is the Proton donor of the active site. Residues His311 and Lys425 contribute to the active site.

The protein belongs to the GPI family. In terms of assembly, homodimer.

It localises to the cytoplasm. The catalysed reaction is alpha-D-glucose 6-phosphate = beta-D-fructose 6-phosphate. The protein operates within carbohydrate biosynthesis; gluconeogenesis. It functions in the pathway carbohydrate degradation; glycolysis; D-glyceraldehyde 3-phosphate and glycerone phosphate from D-glucose: step 2/4. Functionally, catalyzes the reversible isomerization of glucose-6-phosphate to fructose-6-phosphate. The polypeptide is Glucose-6-phosphate isomerase 1 (Geobacillus stearothermophilus (Bacillus stearothermophilus)).